The chain runs to 311 residues: Sulfate adenylyltransferase subunit 2 (311 aa).

It belongs to the PAPS reductase family. CysD subfamily. Heterodimer composed of CysD, the smaller subunit, and CysN.

It carries out the reaction sulfate + ATP + H(+) = adenosine 5'-phosphosulfate + diphosphate. The protein operates within sulfur metabolism; hydrogen sulfide biosynthesis; sulfite from sulfate: step 1/3. In terms of biological role, with CysN forms the ATP sulfurylase (ATPS) that catalyzes the adenylation of sulfate producing adenosine 5'-phosphosulfate (APS) and diphosphate, the first enzymatic step in sulfur assimilation pathway. APS synthesis involves the formation of a high-energy phosphoric-sulfuric acid anhydride bond driven by GTP hydrolysis by CysN coupled to ATP hydrolysis by CysD. The polypeptide is Sulfate adenylyltransferase subunit 2 (Caulobacter vibrioides (strain ATCC 19089 / CIP 103742 / CB 15) (Caulobacter crescentus)).